A 246-amino-acid chain; its full sequence is uncharacterized protein (246 aa).

The segment at 120–149 is disordered; it reads EKCAGETSPYTSASVSNSKKATSSSNFTKS. Residues 130-149 show a composition bias toward low complexity; sequence TSASVSNSKKATSSSNFTKS.

This is an uncharacterized protein from Caenorhabditis elegans.